The sequence spans 365 residues: tRNA/tmRNA (uracil-C(5))-methyltransferase (365 aa).

Gln-189, Tyr-217, Asn-222, Glu-238, and Asp-298 together coordinate S-adenosyl-L-methionine. The active-site Nucleophile is the Cys-323. Glu-357 (proton acceptor) is an active-site residue.

It belongs to the class I-like SAM-binding methyltransferase superfamily. RNA M5U methyltransferase family. TrmA subfamily.

The enzyme catalyses uridine(54) in tRNA + S-adenosyl-L-methionine = 5-methyluridine(54) in tRNA + S-adenosyl-L-homocysteine + H(+). It carries out the reaction uridine(341) in tmRNA + S-adenosyl-L-methionine = 5-methyluridine(341) in tmRNA + S-adenosyl-L-homocysteine + H(+). Its function is as follows. Dual-specificity methyltransferase that catalyzes the formation of 5-methyluridine at position 54 (m5U54) in all tRNAs, and that of position 341 (m5U341) in tmRNA (transfer-mRNA). The chain is tRNA/tmRNA (uracil-C(5))-methyltransferase from Shewanella sediminis (strain HAW-EB3).